Here is a 209-residue protein sequence, read N- to C-terminus: ATP-dependent Clp protease proteolytic subunit (209 aa).

The active-site Nucleophile is serine 106. Residue histidine 131 is part of the active site.

Belongs to the peptidase S14 family. In terms of assembly, fourteen ClpP subunits assemble into 2 heptameric rings which stack back to back to give a disk-like structure with a central cavity, resembling the structure of eukaryotic proteasomes.

The protein localises to the cytoplasm. It carries out the reaction Hydrolysis of proteins to small peptides in the presence of ATP and magnesium. alpha-casein is the usual test substrate. In the absence of ATP, only oligopeptides shorter than five residues are hydrolyzed (such as succinyl-Leu-Tyr-|-NHMec, and Leu-Tyr-Leu-|-Tyr-Trp, in which cleavage of the -Tyr-|-Leu- and -Tyr-|-Trp bonds also occurs).. Its function is as follows. Cleaves peptides in various proteins in a process that requires ATP hydrolysis. Has a chymotrypsin-like activity. Plays a major role in the degradation of misfolded proteins. The protein is ATP-dependent Clp protease proteolytic subunit of Brucella canis (strain ATCC 23365 / NCTC 10854 / RM-666).